We begin with the raw amino-acid sequence, 496 residues long: Cruciferin BnC2 (496 aa).

A signal peptide spans 1 to 23; sequence MARLSSLLYFSITVLIFLHGSTA. Disulfide bonds link cysteine 30–cysteine 63 and cysteine 106–cysteine 313. Cupin type-1 domains follow at residues 35 to 269 and 319 to 468; these read LNAL…RTAQ and DNLD…EEAR. Threonine 109 carries the post-translational modification Phosphothreonine. The disordered stretch occupies residues 114–170; that stretch reads SVFQPGSGSPFGEGQGQGQQGQGQGQGQGQGKGQQGQGKGQQGQSQGQQGQGQGFRD. Residues 122–154 show a composition bias toward gly residues; it reads SPFGEGQGQGQQGQGQGQGQGQGKGQQGQGKGQ. At tyrosine 336 the chain carries Phosphotyrosine. Position 338 is a phosphoserine (serine 338). Phosphothreonine is present on threonine 432.

The protein belongs to the 11S seed storage protein (globulins) family. As to quaternary structure, hexamer; each subunit is composed of an acidic and a basic chain derived from a single precursor and linked by a disulfide bond.

Functionally, this is a seed storage protein. The sequence is that of Cruciferin BnC2 (BnC2) from Brassica napus (Rape).